The following is a 436-amino-acid chain: GTPase Obg (436 aa).

The region spanning 2–160 is the Obg domain; it reads SMFLDTAKIK…RELQLELKIL (159 aa). The 178-residue stretch at 161–338 folds into the OBG-type G domain; the sequence is ADVGLVGFPS…LLDATAELLD (178 aa). GTP-binding positions include 167–174, 192–196, 214–217, 284–287, and 319–321; these read GFPSVGKS, FTTIV, DLPG, NKMD, and SGL. Residues Ser174 and Thr194 each contribute to the Mg(2+) site. In terms of domain architecture, OCT spans 358–436; sequence GFDEEEKAFE…IGKFEFEFVD (79 aa).

This sequence belongs to the TRAFAC class OBG-HflX-like GTPase superfamily. OBG GTPase family. In terms of assembly, monomer. It depends on Mg(2+) as a cofactor.

The protein localises to the cytoplasm. In terms of biological role, an essential GTPase which binds GTP, GDP and possibly (p)ppGpp with moderate affinity, with high nucleotide exchange rates and a fairly low GTP hydrolysis rate. Plays a role in control of the cell cycle, stress response, ribosome biogenesis and in those bacteria that undergo differentiation, in morphogenesis control. The protein is GTPase Obg of Streptococcus pneumoniae (strain CGSP14).